We begin with the raw amino-acid sequence, 261 residues long: NAD-capped RNA hydrolase NudC (261 aa).

Arg-69 lines the substrate pocket. Zn(2+) contacts are provided by Cys-98 and Cys-101. Position 111 (Glu-111) interacts with substrate. Zn(2+) contacts are provided by Cys-116 and Cys-119. Tyr-124 is a substrate binding site. The Nudix hydrolase domain maps to 125 to 248 (PQIAPCIIVA…TVARRLIEDT (124 aa)). 3 residues coordinate a divalent metal cation: Ala-158, Glu-174, and Glu-178. A Nudix box motif is present at residues 159–180 (GFVEVGETLEQTVAREVMEESS). 192 to 199 (QPWPFPQS) provides a ligand contact to substrate. An a divalent metal cation-binding site is contributed by Glu-219. Residue Ala-241 coordinates substrate.

Belongs to the Nudix hydrolase family. NudC subfamily. Homodimer. Mg(2+) is required as a cofactor. The cofactor is Mn(2+). Requires Zn(2+) as cofactor.

The enzyme catalyses a 5'-end NAD(+)-phospho-ribonucleoside in mRNA + H2O = a 5'-end phospho-adenosine-phospho-ribonucleoside in mRNA + beta-nicotinamide D-ribonucleotide + 2 H(+). It catalyses the reaction NAD(+) + H2O = beta-nicotinamide D-ribonucleotide + AMP + 2 H(+). It carries out the reaction NADH + H2O = reduced beta-nicotinamide D-ribonucleotide + AMP + 2 H(+). Its function is as follows. mRNA decapping enzyme that specifically removes the nicotinamide adenine dinucleotide (NAD) cap from a subset of mRNAs by hydrolyzing the diphosphate linkage to produce nicotinamide mononucleotide (NMN) and 5' monophosphate mRNA. The NAD-cap is present at the 5'-end of some mRNAs and stabilizes RNA against 5'-processing. Has preference for mRNAs with a 5'-end purine. Catalyzes the hydrolysis of a broad range of dinucleotide pyrophosphates. This is NAD-capped RNA hydrolase NudC from Erwinia tasmaniensis (strain DSM 17950 / CFBP 7177 / CIP 109463 / NCPPB 4357 / Et1/99).